Here is a 202-residue protein sequence, read N- to C-terminus: Ras-related protein Rab-18 (202 aa).

Residues S18, G21, K22, S23, S24, D35, P36, T41, G67, K124, D126, and A153 each contribute to the GTP site. The short motif at 38 to 46 is the Effector region element; it reads QAATIGVDF. S-geranylgeranyl cysteine attachment occurs at residues C198 and C200.

It belongs to the small GTPase superfamily. Rab family.

The protein resides in the cell membrane. The catalysed reaction is GTP + H2O = GDP + phosphate + H(+). In terms of biological role, the small GTPases Rab are key regulators of intracellular membrane trafficking, from the formation of transport vesicles to their fusion with membranes. Rabs cycle between an inactive GDP-bound form and an active GTP-bound form that is able to recruit to membranes different sets of downstream effectors directly responsible for vesicle formation, movement, tethering and fusion. The chain is Ras-related protein Rab-18 (RAB18A) from Lymnaea stagnalis (Great pond snail).